Consider the following 332-residue polypeptide: L-lactate dehydrogenase A chain (332 aa).

Ala2 carries the post-translational modification N-acetylalanine. Lys5 bears the N6-acetyllysine; alternate mark. An N6-succinyllysine; alternate modification is found at Lys5. Lys14 carries the N6-acetyllysine modification. Thr18 is modified (phosphothreonine). NAD(+) is bound at residue 29 to 57 (GAVGMACAISILMKDLADELALVDVIEDK). Lys57 bears the N6-acetyllysine; alternate mark. A Glycyl lysine isopeptide (Lys-Gly) (interchain with G-Cter in SUMO2); alternate cross-link involves residue Lys57. N6-acetyllysine is present on Lys81. Arg99 serves as a coordination point for NAD(+). Residue Arg106 coordinates substrate. Position 118 is an N6-acetyllysine; alternate (Lys118). Lys118 carries the post-translational modification N6-succinyllysine; alternate. Lys126 is subject to N6-acetyllysine. Asn138 and Arg169 together coordinate substrate. His193 functions as the Proton acceptor in the catalytic mechanism. N6-acetyllysine is present on residues Lys224 and Lys232. Tyr239 carries the phosphotyrosine modification. Residue Lys243 is modified to N6-acetyllysine. Thr248 is a binding site for substrate. Thr309 bears the Phosphothreonine mark. Ser310 bears the Phosphoserine mark. At Lys318 the chain carries N6-acetyllysine; alternate. Position 318 is an N6-succinyllysine; alternate (Lys318). Thr322 carries the post-translational modification Phosphothreonine.

It belongs to the LDH/MDH superfamily. LDH family. Homotetramer. Interacts with PTEN upstream reading frame protein MP31. ISGylated.

Its subcellular location is the cytoplasm. It carries out the reaction (S)-lactate + NAD(+) = pyruvate + NADH + H(+). It functions in the pathway fermentation; pyruvate fermentation to lactate; (S)-lactate from pyruvate: step 1/1. Interconverts simultaneously and stereospecifically pyruvate and lactate with concomitant interconversion of NADH and NAD(+). The polypeptide is L-lactate dehydrogenase A chain (LDHA) (Pongo abelii (Sumatran orangutan)).